We begin with the raw amino-acid sequence, 569 residues long: Mitochondrial import receptor subunit tomm-70 (569 aa).

Topologically, residues 1 to 12 are mitochondrial intermembrane; that stretch reads MVETTGISDQTK. A helical transmembrane segment spans residues 13-32; the sequence is KVLIGVAAAATVAGVGYLVY. Residues 33–569 lie on the Cytoplasmic side of the membrane; that stretch reads KSFGGSDLER…KRAAEMLDMY (537 aa). 4 TPR repeats span residues 44–77, 119–152, 221–254, and 510–544; these read LEEI…AGPN, TKAY…DSSL, DQKQ…PPAM, and LHLL…APPR.

This sequence belongs to the Tom70 family. As to quaternary structure, forms part of the preprotein translocase complex of the outer mitochondrial membrane (TOM complex). Expressed in body wall muscle cells, the pharynx and structures in the tail.

It localises to the mitochondrion outer membrane. Receptor that accelerates the import of all mitochondrial precursor proteins. The sequence is that of Mitochondrial import receptor subunit tomm-70 from Caenorhabditis elegans.